We begin with the raw amino-acid sequence, 202 residues long: Mitochondrial import receptor subunit TOM20-3 (202 aa).

M1 bears the N-acetylmethionine mark. The Cytoplasmic segment spans residues 1-174 (MDTETEFDRI…NKKSSDAKYD (174 aa)). TPR repeat units follow at residues 38 to 74 (GGVLLELSQFHSISDAKQMIQEAITKFEEALLIDPKK) and 86 to 119 (TSFAFLTPDETEAKHNFDLATQFFQQAVDEQPDN). The tract at residues 146–166 (SQPMGRVEAPAPPSSKAVKNK) is disordered. The helical transmembrane segment at 175–192 (AMGWVILAIGVVAWISFA) threads the bilayer. The Mitochondrial intermembrane segment spans residues 193 to 202 (KANVPVSPPR).

Belongs to the Tom20 family. Forms part of the preprotein translocase complex of the outer mitochondrial membrane (TOM complex) which consists of at least 6 different proteins (TOM5, TOM6, TOM7, TOM20, TOM22/TOM9 and TOM40). Component of a mitochondrial large protein complex that contains, at least, MIC60, DGS1, TOM40, TOM20 proteins, and petC/RISP. In terms of processing, the N-terminus is blocked. In terms of tissue distribution, expressed in roots, flowers, young cotyledons and leaves.

Its subcellular location is the mitochondrion outer membrane. Functionally, central component of the receptor complex responsible for the recognition and translocation of cytosolically synthesized mitochondrial preproteins. Together with TOM22 functions as the transit peptide receptor at the surface of the mitochondrion outer membrane and facilitates the movement of preproteins into the translocation pore. In Arabidopsis thaliana (Mouse-ear cress), this protein is Mitochondrial import receptor subunit TOM20-3.